The sequence spans 504 residues: Cobyric acid synthase (504 aa).

Residues 251 to 448 (DITIAIVQLP…LHGLFDSDAF (198 aa)) enclose the GATase cobBQ-type domain. Catalysis depends on Cys332, which acts as the Nucleophile. His440 is an active-site residue.

Belongs to the CobB/CobQ family. CobQ subfamily.

The protein operates within cofactor biosynthesis; adenosylcobalamin biosynthesis. Functionally, catalyzes amidations at positions B, D, E, and G on adenosylcobyrinic A,C-diamide. NH(2) groups are provided by glutamine, and one molecule of ATP is hydrogenolyzed for each amidation. In Salmonella gallinarum (strain 287/91 / NCTC 13346), this protein is Cobyric acid synthase.